The sequence spans 284 residues: Syntaxin-like protein psy1 (284 aa).

Positions E23–N57 form a coiled coil. Residues L181–A243 enclose the t-SNARE coiled-coil homology domain. A helical; Anchor for type IV membrane protein membrane pass occupies residues I260–L280.

It belongs to the syntaxin family.

Its subcellular location is the cell membrane. It localises to the prospore membrane. This Schizosaccharomyces pombe (strain 972 / ATCC 24843) (Fission yeast) protein is Syntaxin-like protein psy1 (psy1).